The following is a 340-amino-acid chain: Phosphate carrier protein, mitochondrial (340 aa).

The N-terminal 27 residues, 1-27 (MSVFSQLAESSKQNPFSLPVRSGNCAS), are a transit peptide targeting the mitochondrion. Solcar repeat units lie at residues 41–125 (KYYA…FKNV), 138–222 (YRTS…TVEA), and 239–317 (EQLV…VKVA). 6 consecutive transmembrane segments (helical) span residues 47-67 (ALGG…LDLV), 95-114 (RALV…QGLG), 141-161 (SLYL…LAPM), 200-220 (PLWM…EKTV), 241-261 (LVVT…VSHP), and 297-317 (IIMI…VKVA).

The protein belongs to the mitochondrial carrier (TC 2.A.29) family.

It localises to the mitochondrion inner membrane. In terms of biological role, transport of phosphate groups from the cytosol to the mitochondrial matrix. The protein is Phosphate carrier protein, mitochondrial of Caenorhabditis elegans.